A 506-amino-acid chain; its full sequence is Exopolysaccharide phosphotransferase NFA_48680 (506 aa).

The tract at residues 484–506 (PAPWERVSAPSRRPLPESTAGAA) is disordered.

Belongs to the stealth family.

The sequence is that of Exopolysaccharide phosphotransferase NFA_48680 from Nocardia farcinica (strain IFM 10152).